The primary structure comprises 409 residues: Dipeptidase 1 (409 aa).

The N-terminal stretch at 1 to 16 (MWTSWWLWPLVAVCAA) is a signal peptide. The Zn(2+) site is built by histidine 36 and aspartate 38. A glycan (N-linked (GlcNAc...) asparagine) is linked at asparagine 57. Cysteine 87 and cysteine 170 are joined by a disulfide. Glutamate 141 contacts Zn(2+). Histidine 168 is a binding site for substrate. Histidine 214 and histidine 235 together coordinate Zn(2+). Cysteine 242 and cysteine 274 are oxidised to a cystine. Arginine 246 lines the substrate pocket. Asparagine 279 is a glycosylation site (N-linked (GlcNAc...) asparagine). Aspartate 304 is a binding site for substrate. Serine 384 carries the GPI-anchor amidated serine lipid modification. Positions 385–409 (AAPSLHLPPGSLLASLVPLLLLSLP) are cleaved as a propeptide — removed in mature form.

It belongs to the metallo-dependent hydrolases superfamily. Peptidase M19 family. In terms of assembly, homodimer; disulfide-linked. It depends on Zn(2+) as a cofactor.

Its subcellular location is the apical cell membrane. It localises to the cell projection. The protein localises to the microvillus membrane. It is found in the cell membrane. It catalyses the reaction an L-aminoacyl-L-amino acid + H2O = 2 an L-alpha-amino acid. The catalysed reaction is leukotriene D4 + H2O = leukotriene E4 + glycine. The enzyme catalyses L-cystine-bis-glycine + 2 H2O = L-cystine + 2 glycine. It carries out the reaction a beta-lactam + H2O = a substituted beta-amino acid. It catalyses the reaction glycyldehydrophenylalanine + H2O = 2,3-didehydrophenylalanine + glycine. Inhibited by L-penicillamine. Inhibited by cilastatin. In terms of biological role, hydrolyzes a wide range of dipeptides. Hydrolyzes the conversion of leukotriene D4 to leukotriene E4. Hydrolyzes cystinyl-bis-glycine (cys-bis-gly) formed during glutathione degradation. Also possesses beta lactamase activity and hydrolytically inactivates beta-lactam antibiotics. Its function is as follows. Independently of its dipeptidase activity, acts as an adhesion receptor for neutrophil recruitment from bloodstream into inflamed lungs and liver. The chain is Dipeptidase 1 (DPEP1) from Sus scrofa (Pig).